Reading from the N-terminus, the 131-residue chain is Small ribosomal subunit protein uS11 (131 aa).

This sequence belongs to the universal ribosomal protein uS11 family. In terms of assembly, part of the 30S ribosomal subunit. Interacts with proteins S7 and S18. Binds to IF-3.

In terms of biological role, located on the platform of the 30S subunit, it bridges several disparate RNA helices of the 16S rRNA. Forms part of the Shine-Dalgarno cleft in the 70S ribosome. This chain is Small ribosomal subunit protein uS11, found in Halorhodospira halophila (strain DSM 244 / SL1) (Ectothiorhodospira halophila (strain DSM 244 / SL1)).